The chain runs to 367 residues: Uroporphyrinogen decarboxylase (367 aa).

Met-1 carries the N-acetylmethionine modification. Residues Arg-37, Ala-39, Arg-41, Arg-50, Asp-86, Tyr-164, Ser-219, and His-339 each coordinate coproporphyrinogen I. 3 residues coordinate coproporphyrinogen III: Arg-37, Ala-39, and Arg-41. Asp-86, Tyr-164, Ser-219, and His-339 together coordinate coproporphyrinogen III.

The protein belongs to the uroporphyrinogen decarboxylase family. Homodimer.

It localises to the cytoplasm. Its subcellular location is the cytosol. It catalyses the reaction uroporphyrinogen III + 4 H(+) = coproporphyrinogen III + 4 CO2. The catalysed reaction is uroporphyrinogen I + 4 H(+) = coproporphyrinogen I + 4 CO2. It participates in porphyrin-containing compound metabolism; protoporphyrin-IX biosynthesis; coproporphyrinogen-III from 5-aminolevulinate: step 4/4. Catalyzes the sequential decarboxylation of the four acetate side chains of uroporphyrinogen to form coproporphyrinogen and participates in the fifth step in the heme biosynthetic pathway. Isomer I or isomer III of uroporphyrinogen may serve as substrate, but only coproporphyrinogen III can ultimately be converted to heme. In vitro also decarboxylates pentacarboxylate porphyrinogen I. The polypeptide is Uroporphyrinogen decarboxylase (Pongo abelii (Sumatran orangutan)).